The following is a 439-amino-acid chain: Xylose isomerase (439 aa).

Active-site residues include H101 and D104. Residues E232, E268, H271, D296, D307, D309, and D339 each coordinate Mg(2+).

It belongs to the xylose isomerase family. Homotetramer. The cofactor is Mg(2+).

It localises to the cytoplasm. It catalyses the reaction alpha-D-xylose = alpha-D-xylulofuranose. This Haemophilus influenzae (strain PittEE) protein is Xylose isomerase.